A 234-amino-acid polypeptide reads, in one-letter code: HTH-type transcriptional regulator ArcR (234 aa).

Residue 40-129 (VRHYTKGQVI…MAFLCKANDD (90 aa)) participates in a nucleoside 3',5'-cyclic phosphate binding. The region spanning 155–228 (KFAKDRIIKL…HKNWLVSKHL (74 aa)) is the HTH crp-type domain. The segment at residues 188-207 (IQLMSDMAGISRETAGHIIH) is a DNA-binding region (H-T-H motif).

It localises to the cytoplasm. In terms of biological role, positively regulates the expression of the arcABDCR operon under anaerobic conditions, thus playing an essential role in arginine catabolism. May also control the expression of genes encoding proteins which are involved in anaerobic metabolism. Can bind cyclic AMP. The polypeptide is HTH-type transcriptional regulator ArcR (arcR) (Staphylococcus aureus (strain USA300 / TCH1516)).